The primary structure comprises 74 residues: NADH dehydrogenase [ubiquinone] 1 alpha subcomplex assembly factor 8 (74 aa).

The region spanning 22-69 (LAACGAEAAAYGRCVQASTAPGGRLSKDFCAREFEALRSCFAAAAKKT) is the CHCH domain. 2 short sequence motifs (cx9C motif) span residues 25-35 (CGAEAAAYGRC) and 51-61 (CAREFEALRSC). Disulfide bonds link C25-C61 and C35-C51.

As to quaternary structure, interacts with NDUFAF5.

It is found in the mitochondrion. Its function is as follows. Involved in the assembly of mitochondrial NADH:ubiquinone oxidoreductase complex (complex I, MT-ND1). Required to stabilize NDUFAF5. The protein is NADH dehydrogenase [ubiquinone] 1 alpha subcomplex assembly factor 8 of Homo sapiens (Human).